Here is a 125-residue protein sequence, read N- to C-terminus: Small ribosomal subunit protein uS12 (125 aa).

Aspartate 89 bears the 3-methylthioaspartic acid mark.

This sequence belongs to the universal ribosomal protein uS12 family. As to quaternary structure, part of the 30S ribosomal subunit. Contacts proteins S8 and S17. May interact with IF1 in the 30S initiation complex.

Functionally, with S4 and S5 plays an important role in translational accuracy. Its function is as follows. Interacts with and stabilizes bases of the 16S rRNA that are involved in tRNA selection in the A site and with the mRNA backbone. Located at the interface of the 30S and 50S subunits, it traverses the body of the 30S subunit contacting proteins on the other side and probably holding the rRNA structure together. The combined cluster of proteins S8, S12 and S17 appears to hold together the shoulder and platform of the 30S subunit. The polypeptide is Small ribosomal subunit protein uS12 (Ralstonia nicotianae (strain ATCC BAA-1114 / GMI1000) (Ralstonia solanacearum)).